We begin with the raw amino-acid sequence, 598 residues long: Aspartate--tRNA(Asp/Asn) ligase (598 aa).

L-aspartate is bound at residue E175. The aspartate stretch occupies residues 199–202 (QQFK). Residues R221 and H452 each contribute to the L-aspartate site. 221-223 (RDE) lines the ATP pocket. E486 serves as a coordination point for ATP. An L-aspartate-binding site is contributed by R493. Position 538–541 (538–541 (GVDR)) interacts with ATP.

This sequence belongs to the class-II aminoacyl-tRNA synthetase family. Type 1 subfamily. In terms of assembly, homodimer.

The protein resides in the cytoplasm. The enzyme catalyses tRNA(Asx) + L-aspartate + ATP = L-aspartyl-tRNA(Asx) + AMP + diphosphate. Its function is as follows. Aspartyl-tRNA synthetase with relaxed tRNA specificity since it is able to aspartylate not only its cognate tRNA(Asp) but also tRNA(Asn). Reaction proceeds in two steps: L-aspartate is first activated by ATP to form Asp-AMP and then transferred to the acceptor end of tRNA(Asp/Asn). This is Aspartate--tRNA(Asp/Asn) ligase from Gluconobacter oxydans (strain 621H) (Gluconobacter suboxydans).